We begin with the raw amino-acid sequence, 363 residues long: Ribosome-binding ATPase YchF (363 aa).

One can recognise an OBG-type G domain in the interval 3-256 (FKCGIVGLPN…LEDEEKVDFL (254 aa)). 12-17 (NVGKST) serves as a coordination point for ATP. Mg(2+) contacts are provided by Ser-16 and Thr-36. The region spanning 278-361 (NLQTYFTAGV…QDGDVMHFRF (84 aa)) is the TGS domain.

The protein belongs to the TRAFAC class OBG-HflX-like GTPase superfamily. OBG GTPase family. YchF/OLA1 subfamily. Mg(2+) serves as cofactor.

Functionally, ATPase that binds to both the 70S ribosome and the 50S ribosomal subunit in a nucleotide-independent manner. This is Ribosome-binding ATPase YchF from Haemophilus ducreyi (strain 35000HP / ATCC 700724).